The primary structure comprises 389 residues: Probable peptidoglycan glycosyltransferase FtsW (389 aa).

The Cytoplasmic segment spans residues 1–14; sequence MPIRDWRQQSQRWP. A helical membrane pass occupies residues 15-35; the sequence is IDYWLIGALAILITLGLTMVA. At 36-57 the chain is on the periplasmic side; the sequence is SSSIAISEKRFGDPTHYLLRQM. Residues 58–78 form a helical membrane-spanning segment; that stretch reads FSMGLGLMAAYIVLKIPLSFW. Topologically, residues 79-84 are cytoplasmic; the sequence is RKHRGQ. The helical transmembrane segment at 85–105 threads the bilayer; sequence LFIVGLVLLVLVLVFGREING. Residues 106-111 lie on the Periplasmic side of the membrane; sequence SKRWLP. Residues 112–132 form a helical membrane-spanning segment; that stretch reads LVLMNFQVSEFMKIAVVVFMA. Over 133–144 the chain is Cytoplasmic; that stretch reads GYLDRHATAVRE. The helical transmembrane segment at 145-165 threads the bilayer; that stretch reads SFEAVIRLALPFGVMAILLLL. Residues 166–168 are Periplasmic-facing; it reads EPD. Residues 169-189 traverse the membrane as a helical segment; it reads FGSTFVIAVIITGMLLIAGAP. Topologically, residues 190-191 are cytoplasmic; sequence WR. Residues 192-212 traverse the membrane as a helical segment; that stretch reads FFVMTVLPIATLLVMMVITSP. The Periplasmic segment spans residues 213-268; the sequence is YRMARVTNFLDPWSDPFGNGYQLTQALIASGRGEWFGVGIGESVQKLLYLPDAHTD. A helical transmembrane segment spans residues 269–289; it reads FLFSIYAEEYGLIGVAFLALL. Residues 290 to 310 are Cytoplasmic-facing; sequence YLTLLYRCFRIGRKAFNQTHY. Residues 311 to 331 traverse the membrane as a helical segment; that stretch reads FGGLIAYGVGIWIVLQAMINM. Residues 332 to 344 lie on the Periplasmic side of the membrane; the sequence is GVNLGLFPTKGLT. Residues 345 to 365 form a helical membrane-spanning segment; that stretch reads LPFMSYGGSSVLMLFIGVAMV. The Cytoplasmic segment spans residues 366 to 389; it reads LRVDLETRQAVLEHSVDESGQGKR.

This sequence belongs to the SEDS family. FtsW subfamily.

Its subcellular location is the cell inner membrane. The enzyme catalyses [GlcNAc-(1-&gt;4)-Mur2Ac(oyl-L-Ala-gamma-D-Glu-L-Lys-D-Ala-D-Ala)](n)-di-trans,octa-cis-undecaprenyl diphosphate + beta-D-GlcNAc-(1-&gt;4)-Mur2Ac(oyl-L-Ala-gamma-D-Glu-L-Lys-D-Ala-D-Ala)-di-trans,octa-cis-undecaprenyl diphosphate = [GlcNAc-(1-&gt;4)-Mur2Ac(oyl-L-Ala-gamma-D-Glu-L-Lys-D-Ala-D-Ala)](n+1)-di-trans,octa-cis-undecaprenyl diphosphate + di-trans,octa-cis-undecaprenyl diphosphate + H(+). It functions in the pathway cell wall biogenesis; peptidoglycan biosynthesis. In terms of biological role, peptidoglycan polymerase that is essential for cell division. The protein is Probable peptidoglycan glycosyltransferase FtsW of Hydrogenovibrio crunogenus (strain DSM 25203 / XCL-2) (Thiomicrospira crunogena).